We begin with the raw amino-acid sequence, 245 residues long: Complement C1q subcomponent subunit C (245 aa).

A signal peptide spans 1 to 28 (MDVGPSSLPHLGLKLLLLLLLLPLRGQA). The 82-residue stretch at 31 to 112 (GCYGIPGMPG…GIPGEPGEEG (82 aa)) folds into the Collagen-like domain. Residues P36, P39, P42, P45, P54, and P63 each carry the 4-hydroxyproline modification. The interval 45–113 (PGKDGYDGLP…IPGEPGEEGR (69 aa)) is disordered. Low complexity predominate over residues 54-71 (PGPKGEPGIPAIPGIRGP). At K75 the chain carries 5-hydroxylysine. K75 carries O-linked (Gal...) hydroxylysine glycosylation. 4-hydroxyproline occurs at positions 81, 93, 96, 99, and 105. The segment covering 90-99 (MGPPGMPGVP) has biased composition (pro residues). Residues 115–245 (KQKFQSVFTV…VFSGFLLFPD (131 aa)) form the C1q domain. The cysteines at positions 179 and 193 are disulfide-linked.

As to quaternary structure, core component of the complement C1 complex, a calcium-dependent complex composed of 1 molecule of the C1Q subcomplex, 2 molecules of C1R and 2 molecules of C1S. The C1Q subcomplex is composed 18 subunits: 3 chains of C1QA, C1QB, and C1QC trimerize to form 6 collagen-like triple helices connected to six globular ligand-recognition modules (C1q domain). O-linked glycans consist of Glc-Gal disaccharides bound to the oxygen atom of post-translationally added hydroxyl groups.

It is found in the secreted. It localises to the cell surface. With respect to regulation, the C1Q subcomplex is inhibited by sulfated molecules, such as triterpenoid sulfates, heparan sulfate, or chondroitin sulfates. Functionally, core component of the complement C1 complex, a multiprotein complex that initiates the classical pathway of the complement system, a cascade of proteins that leads to phagocytosis and breakdown of pathogens and signaling that strengthens the adaptive immune system. The classical complement pathway is initiated by the C1Q subcomplex of the C1 complex, which specifically binds IgG or IgM immunoglobulins complexed with antigens, forming antigen-antibody complexes on the surface of pathogens: C1QA, together with C1QB and C1QC, specifically recognizes and binds the Fc regions of IgG or IgM via its C1q domain. Immunoglobulin-binding activates the proenzyme C1R, which cleaves C1S, initiating the proteolytic cascade of the complement system. The C1Q subcomplex is activated by a hexamer of IgG complexed with antigens, while it is activated by a pentameric IgM. The C1Q subcomplex also recognizes and binds phosphatidylserine exposed on the surface of cells undergoing programmed cell death, possibly promoting activation of the complement system. This chain is Complement C1q subcomponent subunit C, found in Homo sapiens (Human).